A 258-amino-acid polypeptide reads, in one-letter code: Short-chain dehydrogenase/reductase FrzI (258 aa).

Positions 21, 41, and 94 each coordinate NADP(+). Catalysis depends on proton donor residues Ser143 and Ser144. Positions 157, 161, 191, and 193 each coordinate NADP(+). Tyr157 functions as the Proton acceptor in the catalytic mechanism. Residue Lys161 is the Lowers pKa of active site Tyr of the active site.

It belongs to the short-chain dehydrogenases/reductases (SDR) family.

It catalyses the reaction (1S,3S,6S,7S,8R)-7-hydroxy-6-[(4-methoxyphenyl)methyl]-3-(methylamino)-5-azatricyclo[6.3.1.0(1,5)]dodecan-9-one + NADPH + H(+) = (1S,3S,6S,7S,8S,9S)-6-[(4-methoxyphenyl)methyl]-3-(methylamino)-5-azatricyclo[6.3.1.0(1,5)]dodecane-7,9-diol + NADP(+). It participates in secondary metabolite biosynthesis. In terms of biological role, short-chain dehydrogenase/reductase; part of the gene cluster that mediates the biosynthesis of the alkaloid (-)-FR901483, a potent immunosuppressant that shows efficacy in animal models and a probable inhibitor of purine nucleotide biosynthesis by targeting phosphoribosylpyrophosphate amidotransferase (PPAT). Within the pathway, FrzI catalyzes the formation of dephospho-(-)-FR901483 from the aza-tricyclic intermediate produced by FrzH. The biosynthesis of (-)-FR901483 starts with the condensation of two L-tyrosines to yield (S,S)-dityrosyl-piperazine. This process occurs in 3 steps with the non-canonical nonribosomal peptide synthetase FrzA catalyzing the reduction of L-tyrosine into L-tyrosinal, the spontaneous condensation of 2 L-tyrosinal units, and the subsequent reduction by the NmrA-like family domain-containing oxidoreductase FrzB. The cytochrome P450 monooxygenase FrzC then performs coupling between N10 and C1' to morph the piperazine into a 1,4-diazabicyclo[3.2.1]octane spiro-fused to a 2,5-cyclohexadienone. The dienone portion is further reduced to cyclohexanone by the flavin-dependent reductase FrzD. The methyltranserases (MTs) FrzE and FrzF are then involved in the methylation at the C10' amine and the C4 phenolic oxygen, respectively. The order of the two MTs appear to be interchangeable. Cleavage of the C9-N10' bond by the dioxygenase FrzG then leads to formation of a conjugated iminium. In addition to the oxidation of C9, an additional dehydrogenation between C7 and C8 can occur to give a likely shunt product. The next biosynthetic step is the intramolecular aldol condensation catalyzed by the newly identified aldolase FrzH to yield an aza-tricyclic product with the formation of a C9-C3' bond. The short-chain dehydrogenase/reductase FrzI then produces dephospho-(-)-FR901483 that is phosphorylated at C4'-OH into (-)-FR901483 by the phosphotransferase FrzJ. This chain is Short-chain dehydrogenase/reductase FrzI, found in Cladobotryum sp.